The chain runs to 549 residues: Manganese transporter SMF2 (549 aa).

Residues 1-23 are disordered; sequence MTSQEYEPIQWSDESQTNNDSVN. A compositionally biased stretch (polar residues) spans 12-22; that stretch reads SDESQTNNDSV. Helical transmembrane passes span 91-109, 130-147, 161-185, 196-214, 312-332, 350-372, 432-452, and 521-541; these read LLFS…QYLC, FGLN…IIAT, ILFH…LLAY, IFEA…CFTV, LLIS…IVSG, IYNL…ALLF, ASQV…LYFT, and VLAI…LLGF.

The protein belongs to the NRAMP family.

The protein localises to the vacuole lumen. The protein resides in the vesicle. It is found in the cell membrane. It catalyses the reaction Mn(2+)(in) = Mn(2+)(out). High-affinity manganese transporter involved in manganese uptake from the extracellular environment. This is Manganese transporter SMF2 (SMF2) from Saccharomyces cerevisiae (strain ATCC 204508 / S288c) (Baker's yeast).